Here is an 873-residue protein sequence, read N- to C-terminus: Rho GTPase-activating protein gacJJ (873 aa).

Residues 64-147 are disordered; the sequence is DEPSSINTSS…NVNNSSNAPT (84 aa). Low complexity predominate over residues 66–91; sequence PSSINTSSGNIGSNNNSSSNTPLTGS. A compositionally biased stretch (gly residues) spans 103-112; the sequence is IGGGGGGGDN. Over residues 113 to 144 the composition is skewed to low complexity; it reads GITNSGNIGSSSNSDLKKSTSSGIVNVNNSSN. In terms of domain architecture, PH spans 301–402; it reads NPVREGYLKK…WTVLPIVIES (102 aa). A Rho-GAP domain is found at 428–621; the sequence is VPIEKTVSGN…SLIRDYQYIF (194 aa). In terms of domain architecture, SH3 spans 628-694; sequence EQKILAKSLY…PASYVELLPH (67 aa). Positions 715–761 form a coiled coil; the sequence is MLEMESTKTKNQEIDKNIKQLEITKKELESTINDLENEKAALENDPT.

It is found in the cytoplasm. Functionally, rho GTPase-activating protein involved in the signal transduction pathway. The chain is Rho GTPase-activating protein gacJJ (gacJJ) from Dictyostelium discoideum (Social amoeba).